We begin with the raw amino-acid sequence, 350 residues long: Salicylate decarboxylase (350 aa).

It belongs to the metallo-dependent hydrolases superfamily. In terms of assembly, homotetramer.

It catalyses the reaction salicylate + H(+) = phenol + CO2. Inhibited by AgNO(3), HgCl(2), p-chloromercuribenzoic acid and NiCl(2). Its function is as follows. Reversibly catalyzes the regioselective carboxylation of phenol to form salicylic acid. Involved in a pathway for the degradation of salicylate via phenol. Also catalyzes the decarboxylation of beta-resorcylic acid (2,4-dihydroxybenzoic acid) into resorcinol (1,3-dihydroxybenzene), gamma-resorcylic acid (2,6-dihydroxybenzoic acid) into resorcinol, 2,3-dihydroxybenzoic acid into catechol (1,2-dihydroxybenzene), and 4-aminosalicylic acid into 3-aminophenol. The chain is Salicylate decarboxylase from Cutaneotrichosporon moniliiforme (Yeast).